Reading from the N-terminus, the 432-residue chain is C-type cytochrome OmcS (432 aa).

The signal sequence occupies residues 1–25; sequence MKKGMKVSLSVAAAALLMSAPAAFA.

It depends on heme as a cofactor.

It localises to the cell outer membrane. The protein resides in the cell surface. Its function is as follows. Plays an important role in extracellular electron transfer. Can transfer electrons to insoluble Fe(3+) oxides as well as other extracellular electron acceptors, including Mn(4+) oxide and humic substances. Essential for direct interspecies electron transfer (DIET) in cocultures with G.metallireducens. The sequence is that of C-type cytochrome OmcS from Geobacter sulfurreducens (strain ATCC 51573 / DSM 12127 / PCA).